Here is a 308-residue protein sequence, read N- to C-terminus: Elongation factor Ts (308 aa).

The interval threonine 80 to valine 83 is involved in Mg(2+) ion dislocation from EF-Tu.

This sequence belongs to the EF-Ts family.

The protein resides in the cytoplasm. Its function is as follows. Associates with the EF-Tu.GDP complex and induces the exchange of GDP to GTP. It remains bound to the aminoacyl-tRNA.EF-Tu.GTP complex up to the GTP hydrolysis stage on the ribosome. The sequence is that of Elongation factor Ts from Rhizobium rhizogenes (strain K84 / ATCC BAA-868) (Agrobacterium radiobacter).